The primary structure comprises 502 residues: Glycerol kinase (502 aa).

Threonine 14 contributes to the ADP binding site. ATP is bound by residues threonine 14, threonine 15, and serine 16. Threonine 14 is a sn-glycerol 3-phosphate binding site. Residue arginine 18 coordinates ADP. Sn-glycerol 3-phosphate is bound by residues arginine 84, glutamate 85, tyrosine 136, and aspartate 246. Residues arginine 84, glutamate 85, tyrosine 136, aspartate 246, and glutamine 247 each contribute to the glycerol site. The ADP site is built by threonine 268 and glycine 311. 4 residues coordinate ATP: threonine 268, glycine 311, glutamine 315, and glycine 412. ADP is bound by residues glycine 412 and asparagine 416.

The protein belongs to the FGGY kinase family. Homotetramer and homodimer (in equilibrium). Heterodimer with EIIA-Glc. Binds 1 zinc ion per glycerol kinase EIIA-Glc dimer. The zinc ion is important for dimerization.

The enzyme catalyses glycerol + ATP = sn-glycerol 3-phosphate + ADP + H(+). Its pathway is polyol metabolism; glycerol degradation via glycerol kinase pathway; sn-glycerol 3-phosphate from glycerol: step 1/1. With respect to regulation, activity of this regulatory enzyme is affected by several metabolites. Allosterically and non-competitively inhibited by fructose 1,6-bisphosphate (FBP) and unphosphorylated phosphocarrier protein EIIA-Glc (III-Glc), an integral component of the bacterial phosphotransferase (PTS) system. Its function is as follows. Key enzyme in the regulation of glycerol uptake and metabolism. Catalyzes the phosphorylation of glycerol to yield sn-glycerol 3-phosphate. This is Glycerol kinase from Escherichia coli O81 (strain ED1a).